Here is a 69-residue protein sequence, read N- to C-terminus: uncharacterized protein (69 aa).

Residues 6–56 form the CHCH domain; it reads SEECTPAKKKYDACFNDWYANKFLKGDLHNRDCDELFAEYKSCLLKALKTK. 2 consecutive short sequence motifs (cx9C motif) follow at residues 9-19 and 38-48; these read CTPAKKKYDAC and CDELFAEYKSC. 2 cysteine pairs are disulfide-bonded: C9–C48 and C19–C38.

This sequence belongs to the TRIAP1/MDM35 family.

This is an uncharacterized protein from Schizosaccharomyces pombe (strain 972 / ATCC 24843) (Fission yeast).